Here is a 785-residue protein sequence, read N- to C-terminus: MEKKVEAILEFDKIKKQLAEFASSSLGEQAIYELAPATDFQVVQKAQLETEEGAKIIRLRGSAPITGLTDVFAHLKRLEIGGDLNGLEIYQIGSNLRVSRQMKNFMNDLLEIGVEIPLLGALSDELLVLKDVEEDIAISIDESGKILDTASEALSSIRRTLRRTEDRVREKLESYLRDRNASKMLSDAVITIRNDRYVIPVKQEYKGHYGGIVHDQSASGQTLFIEPQSVVDLNNERKALQAKEKQEIERILAEISASLAGWINEIHHNTFILGRFDFILAKARFGKALKAVTPHLSDTGIVHLIAARHPLLDAEKVVANDIYLGEDFSTIVITGPNTGGKTITLKTLGLLTLMAQSGLQIPAQEDSTIAVFENVFADIGDEQSIEQSLSTFSSHMTNIVSILEKVNHKSLILYDELGAGTDPQEGAALAIAILDASHKKGASVVATTHYPELKAYGYNRAHATNASVEFNVETLSPTYKLLIGVPGRSNAFDISRRLGLSESIITEARSLVDTESADLNDMISSLEEKRNLAEREYEEARELARGADALLKDLQKEITNYYQQKDKLLEQANEKAAGIVEKAETEAEEIIHELRTMQLNGAAGIKEHELIDAKTRLGKAKPKTINKAIPKAPKQKPHVFQAGDNVRVLSLGQKGTLLNKISDKEWNVQIGIIKMKIKTTDLEYIEPEKPKKQRIITSVHSSDSPAKSELDLRGERYEDAIQKVDKYLDEALLAGYPQVAIIHGKGTGALRTGVTEYLKNHRMVKSIRFGAAAEGGNGVTIVEFK.

335–342 (GPNTGGKT) lines the ATP pocket. Residues 710-785 (LDLRGERYED…GNGVTIVEFK (76 aa)) form the Smr domain.

It belongs to the DNA mismatch repair MutS family. MutS2 subfamily. Homodimer. Binds to stalled ribosomes, contacting rRNA.

Endonuclease that is involved in the suppression of homologous recombination and thus may have a key role in the control of bacterial genetic diversity. Its function is as follows. Acts as a ribosome collision sensor, splitting the ribosome into its 2 subunits. Detects stalled/collided 70S ribosomes which it binds and splits by an ATP-hydrolysis driven conformational change. Acts upstream of the ribosome quality control system (RQC), a ribosome-associated complex that mediates the extraction of incompletely synthesized nascent chains from stalled ribosomes and their subsequent degradation. Probably generates substrates for RQC. This is Endonuclease MutS2 from Listeria innocua serovar 6a (strain ATCC BAA-680 / CLIP 11262).